Here is a 466-residue protein sequence, read N- to C-terminus: Trigger factor (466 aa).

Positions 166–245 (GDFAQIDLVA…LNAVKERELP (80 aa)) constitute a PPIase FKBP-type domain. Disordered regions lie at residues 313 to 332 (LEQE…TESS) and 424 to 466 (LPDD…AADK). Over residues 426–444 (DDGEAVDEDATPEDTDAPA) the composition is skewed to acidic residues. Over residues 453 to 466 (PKKKAAAKKKAADK) the composition is skewed to basic residues.

Belongs to the FKBP-type PPIase family. Tig subfamily.

It localises to the cytoplasm. It catalyses the reaction [protein]-peptidylproline (omega=180) = [protein]-peptidylproline (omega=0). Functionally, involved in protein export. Acts as a chaperone by maintaining the newly synthesized protein in an open conformation. Functions as a peptidyl-prolyl cis-trans isomerase. This chain is Trigger factor, found in Leifsonia xyli subsp. xyli (strain CTCB07).